Here is a 120-residue protein sequence, read N- to C-terminus: Aspartate 1-decarboxylase (120 aa).

Ser-25 functions as the Schiff-base intermediate with substrate; via pyruvic acid in the catalytic mechanism. The residue at position 25 (Ser-25) is a Pyruvic acid (Ser). Position 57 (Thr-57) interacts with substrate. Residue Tyr-58 is the Proton donor of the active site. 73–75 (GAA) is a binding site for substrate.

This sequence belongs to the PanD family. Heterooctamer of four alpha and four beta subunits. Requires pyruvate as cofactor. In terms of processing, is synthesized initially as an inactive proenzyme, which is activated by self-cleavage at a specific serine bond to produce a beta-subunit with a hydroxyl group at its C-terminus and an alpha-subunit with a pyruvoyl group at its N-terminus.

It localises to the cytoplasm. The catalysed reaction is L-aspartate + H(+) = beta-alanine + CO2. Its pathway is cofactor biosynthesis; (R)-pantothenate biosynthesis; beta-alanine from L-aspartate: step 1/1. In terms of biological role, catalyzes the pyruvoyl-dependent decarboxylation of aspartate to produce beta-alanine. In Methylibium petroleiphilum (strain ATCC BAA-1232 / LMG 22953 / PM1), this protein is Aspartate 1-decarboxylase.